The sequence spans 504 residues: Dolichol kinase sec59 (504 aa).

The Cytoplasmic portion of the chain corresponds to 1-55; sequence MYIMSKKCYDTSEKIDREQECVEVNYQHRNFESILEIFSVLFIPFLCNSGKKFLQ. Residues 56-76 traverse the membrane as a helical segment; sequence ISNASFFLPACFYLLGSSSII. Position 77 (Gln77) is a topological domain, lumenal. Residues 78–98 traverse the membrane as a helical segment; it reads LYEPLLWLSSFPFCILYVGFG. The Cytoplasmic segment spans residues 99–157; that stretch reads ENSVLYHEMYTVCLYNALLSLTQRWKWLSIVLDGLGNSSVNLKLHETVILAFLEITQNS. The helical transmembrane segment at 158–178 threads the bilayer; the sequence is FTFIEGILICTGLTGLCFATF. At 179-187 the chain is on the lumenal side; the sequence is SYEVSPVVS. The helical transmembrane segment at 188–208 threads the bilayer; sequence VLSGVLLISLPTLILLNLCIL. The Cytoplasmic segment spans residues 209–215; it reads KLAAKLH. The helical transmembrane segment at 216–236 threads the bilayer; it reads LSALFTTCLIYFFSALLVFLV. The Lumenal segment spans residues 237–263; the sequence is SRSWVAGQLGQAPEVWLFNQIFSHRNS. The helical transmembrane segment at 264–284 threads the bilayer; it reads LTRIKIIIWWIICLGCFIFIL. Topologically, residues 285–325 are cytoplasmic; sequence LRSNRNNPLGKYFTTEDEVLNFRRKTYHALVVFLFLPVCCL. A helical membrane pass occupies residues 326–347; the sequence is DPHFLHLSFSGVLFIFLFVEGI. The Lumenal segment spans residues 348-373; it reads RILRLKPFGKMIHEFLWEYTDNRDHK. The helical transmembrane segment at 374–394 threads the bilayer; sequence GPLIISHIYLLIGCAIPIWLS. The Cytoplasmic portion of the chain corresponds to 395-403; the sequence is NALKGPVAS. Residues 404–424 form a helical membrane-spanning segment; that stretch reads VELLVGVLCLGCGDSMASIIG. The Lumenal segment spans residues 425–440; sequence KRFGKHRISKTNKSIE. A helical transmembrane segment spans residues 441–461; that stretch reads GVFAFSISVFLVLHLTQAFHV. A topological domain (cytoplasmic) is located at residue Cys462. The chain crosses the membrane as a helical span at residues 463 to 483; that stretch reads PSVTFWKTLFMSLCTAILEGV. Topologically, residues 484–504 are lumenal; the sequence is STENDNLILPMYMWVLYQALD.

This sequence belongs to the polyprenol kinase family.

It is found in the endoplasmic reticulum membrane. It catalyses the reaction a di-trans,poly-cis-dolichol + CTP = a di-trans,poly-cis-dolichyl phosphate + CDP + H(+). It functions in the pathway protein modification; protein glycosylation. Functionally, catalyzes CTP-mediated phosphorylation of dolichol, the terminal step in de novo dolichyl monophosphate (Dol-P) biosynthesis. Dol-P is a lipid carrier essential for the synthesis of N-linked and O-linked oligosaccharides and for GPI anchors. In Schizosaccharomyces pombe (strain 972 / ATCC 24843) (Fission yeast), this protein is Dolichol kinase sec59.